The sequence spans 148 residues: Extracellular globin-2B (148 aa).

The region spanning 3–148 is the Globin domain; it reads CCSAADRHEV…IADVIKAELP (146 aa). An intrachain disulfide couples Cys-4 to Cys-135. Heme b is bound at residue His-98.

It belongs to the globin family. As to quaternary structure, disulfide bonded trimer of chains IIA, IIB, and IIC.

It is found in the secreted. The polypeptide is Extracellular globin-2B (Tylorrhynchus heterochetus (Japanese palolo worm)).